Reading from the N-terminus, the 343-residue chain is Biotin synthase (343 aa).

Residues 36 to 254 form the Radical SAM core domain; the sequence is NTIQISTLLS…IAVARIMMPK (219 aa). Residues Cys51, Cys55, and Cys58 each coordinate [4Fe-4S] cluster. Residues Cys95, Cys126, Cys186, and Arg258 each contribute to the [2Fe-2S] cluster site.

It belongs to the radical SAM superfamily. Biotin synthase family. Homodimer. [4Fe-4S] cluster is required as a cofactor. [2Fe-2S] cluster serves as cofactor.

The enzyme catalyses (4R,5S)-dethiobiotin + (sulfur carrier)-SH + 2 reduced [2Fe-2S]-[ferredoxin] + 2 S-adenosyl-L-methionine = (sulfur carrier)-H + biotin + 2 5'-deoxyadenosine + 2 L-methionine + 2 oxidized [2Fe-2S]-[ferredoxin]. It functions in the pathway cofactor biosynthesis; biotin biosynthesis; biotin from 7,8-diaminononanoate: step 2/2. Functionally, catalyzes the conversion of dethiobiotin (DTB) to biotin by the insertion of a sulfur atom into dethiobiotin via a radical-based mechanism. The chain is Biotin synthase from Buchnera aphidicola subsp. Acyrthosiphon pisum (strain APS) (Acyrthosiphon pisum symbiotic bacterium).